The primary structure comprises 236 residues: Activating transcription factor of chaperone (236 aa).

A disordered region spans residues 117–185 (HRASQLASPQ…KNAATRYRQK (69 aa)). Residues 120–137 (SQLASPQHSSSSANASPR) show a composition bias toward low complexity. Residues 162–175 (RPVDDRRSRKKEQN) are compositionally biased toward basic and acidic residues. Residues 165–228 (DDRRSRKKEQ…RYLKALMRDL (64 aa)) form the bZIP domain. Positions 167–187 (RRSRKKEQNKNAATRYRQKKK) are basic motif. The segment at 193–228 (LLKEEQTLRQRHTELGEKCSDLQREIRYLKALMRDL) is leucine-zipper.

It belongs to the bZIP family. As to quaternary structure, binds DNA as a dimer.

Its subcellular location is the nucleus. Its function is as follows. Transcriptional activator that acts in the unfolded protein response (UPR) pathway. Acts during endoplasmic reticulum (ER) stress by activating UPR target genes via direct binding to the UPR element (UPRE) (5'-GGAACTGGACAGCGTGTCGAAA-3'). Activates expression of ER chaperones ERP72 and PDI. The chain is Activating transcription factor of chaperone from Bombyx mori (Silk moth).